We begin with the raw amino-acid sequence, 938 residues long: Cyclin-dependent kinase-like 5 (938 aa).

One can recognise a Protein kinase domain in the interval 13–297; it reads FEILGVVGEG…TEQCLNHPTF (285 aa). Residues 19-27 and K42 contribute to the ATP site; that span reads VGEGAYGVV. The active-site Proton acceptor is D135. 4 disordered regions span residues 298-348, 382-566, 646-865, and 877-938; these read QTQR…DIQN, KTYQ…RHSK, SPQP…LTAQ, and HPLS…KWKQ. Composition is skewed to polar residues over residues 319 to 331 and 382 to 402; these read ESST…QSTK and KTYQ…NNNI. S407 bears the Phosphoserine mark. The segment covering 407–417 has biased composition (basic and acidic residues); the sequence is SPKEAKSKTEF. Composition is skewed to polar residues over residues 434-462, 473-482, and 494-548; these read LKSS…QPSE, IPQSSRSPSY, and DSKS…SGRN. The residue at position 479 (S479) is a Phosphoserine. Basic and acidic residues-rich tracts occupy residues 549–559 and 679–704; these read NRNEGTLDSRR and QKSE…RHLY. S720 carries the post-translational modification Phosphoserine. Residues 728–748 show a composition bias toward polar residues; it reads HENNVSTRVSSLPSDSSSGTN. S761 carries the phosphoserine modification. 2 stretches are compositionally biased toward basic and acidic residues: residues 769-778 and 817-827; these read DQLKEKEKQG and RPKEWRPEKLS. Positions 880–891 are enriched in polar residues; that stretch reads SQATGGSSNIRQ.

It belongs to the protein kinase superfamily. CMGC Ser/Thr protein kinase family. CDC2/CDKX subfamily. Interacts with MECP2. In terms of processing, autophosphorylated.

It is found in the nucleus. The protein localises to the cytoplasm. The protein resides in the cytoskeleton. Its subcellular location is the cilium basal body. It localises to the microtubule organizing center. It is found in the centrosome. It catalyses the reaction L-seryl-[protein] + ATP = O-phospho-L-seryl-[protein] + ADP + H(+). The catalysed reaction is L-threonyl-[protein] + ATP = O-phospho-L-threonyl-[protein] + ADP + H(+). In terms of biological role, mediates phosphorylation of MECP2. May regulate ciliogenesis. The sequence is that of Cyclin-dependent kinase-like 5 from Mus musculus (Mouse).